The primary structure comprises 101 residues: Large ribosomal subunit protein uL24 (101 aa).

This sequence belongs to the universal ribosomal protein uL24 family. As to quaternary structure, part of the 50S ribosomal subunit.

In terms of biological role, one of two assembly initiator proteins, it binds directly to the 5'-end of the 23S rRNA, where it nucleates assembly of the 50S subunit. One of the proteins that surrounds the polypeptide exit tunnel on the outside of the subunit. The protein is Large ribosomal subunit protein uL24 of Borreliella afzelii (strain PKo) (Borrelia afzelii).